Consider the following 645-residue polypeptide: MAEIHELSEILADQIAAGEVVERPASVVKELVENAIDAGSSRIDILLEESGLKMIRIIDNGSGIDANQVEIAFKRHATSKISSRSDLFKVGTLGFRGEALPSIASIADVEMLTATTDGPGKKIHYRGGKLEDSGDAQSRQGTDITVQDLFFNTPARLKYLKSLQTELSKITDIVNRIALSYPEVAISLQNNERELMRTSGNGNIQQVLANIYGAKNAQKMVHVKEQNIDFTIDGYISLPEFTRANRSYITVLVNGRYIKNFQISKAIIDGYGSKLMVGRYPVAVLNIKTDPILVDVNVHPTKQEVRISEEQTLLDLISKAVFNELADKNLIPDAVDNLKKSRVKVSSSEQLDLARMAISGSFEMEQDHVTIPDTDNDEVEKEVNISDRYVEPEPIVINSRQDLKSDTIAEFKTKYANDAVVNNTVEDGDQPELKEKDAVQRFPTLTYIGQMHGTYLFAEAEDGLYIIDQHAAQERINYEYYRVQIGEVSDDQQDLLVPIYLDYSTTDAIRIKEKQTVLESCGLFLEEFGKNTFIVRHHPTWFKKGQEEDTVKEMVDYVLNDSSMTVAKFREATAIMMSCKRAIKANHHLDEPQAKQLLKDIAKAENPFNCPHGRPVLVHFSTTDMEKMFKRIQDPHHSDLMEDEM.

This sequence belongs to the DNA mismatch repair MutL/HexB family.

Functionally, this protein is involved in the repair of mismatches in DNA. It is required for dam-dependent methyl-directed DNA mismatch repair. May act as a 'molecular matchmaker', a protein that promotes the formation of a stable complex between two or more DNA-binding proteins in an ATP-dependent manner without itself being part of a final effector complex. The polypeptide is DNA mismatch repair protein MutL (Pediococcus pentosaceus (strain ATCC 25745 / CCUG 21536 / LMG 10740 / 183-1w)).